Consider the following 121-residue polypeptide: Small ribosomal subunit protein uS13 (121 aa).

The disordered stretch occupies residues 91–121 (HRRGLPVRGQKTKNNARTRKGPVKTVANKKK).

It belongs to the universal ribosomal protein uS13 family. Part of the 30S ribosomal subunit. Forms a loose heterodimer with protein S19. Forms two bridges to the 50S subunit in the 70S ribosome.

Its function is as follows. Located at the top of the head of the 30S subunit, it contacts several helices of the 16S rRNA. In the 70S ribosome it contacts the 23S rRNA (bridge B1a) and protein L5 of the 50S subunit (bridge B1b), connecting the 2 subunits; these bridges are implicated in subunit movement. Contacts the tRNAs in the A and P-sites. This Staphylococcus aureus (strain Mu3 / ATCC 700698) protein is Small ribosomal subunit protein uS13.